The primary structure comprises 1081 residues: Histone demethylase-like protein A (1081 aa).

Positions 37–173 are disordered; sequence QHLQHPSLPN…LSGNTDYARY (137 aa). The segment covering 66–81 has biased composition (low complexity); the sequence is SPSCNESNESNGETSS. The span at 119-132 shows a compositional bias: polar residues; sequence DTSNILSGSATSVS. A compositionally biased stretch (low complexity) spans 141–161; that stretch reads NSTPPSTVNNVPSSSSITSDS. The 96-residue stretch at 192–287 folds into the SWIRM domain; the sequence is CVTAAYACRL…FGCVEIPPAL (96 aa). Residues 902 to 940 are disordered; that stretch reads ATAQKKKEPPCSNGFSAPVSTSAHPTDASAPARSNNSFS. Residues 914–925 show a composition bias toward polar residues; sequence NGFSAPVSTSAH. The HMG box DNA-binding region spans 969-1049; it reads ARTGLNPFLL…TNTEIWDRWK (81 aa).

Belongs to the flavin monoamine oxidase family.

The protein resides in the nucleus. Its function is as follows. H3K4 demethylase-like protein. Might not act as a H3K4 demethylase or is not the major H3K4 demethylase since its deletion does not affect whole genome H3K4 methylation. This chain is Histone demethylase-like protein A, found in Aspergillus fumigatus (strain ATCC MYA-4609 / CBS 101355 / FGSC A1100 / Af293) (Neosartorya fumigata).